A 260-amino-acid polypeptide reads, in one-letter code: ATP synthase subunit a (260 aa).

A run of 5 helical transmembrane segments spans residues 27-47, 90-110, 132-154, 208-228, and 230-250; these read FWTVNIDSMIFSVLLGALFIW, IAPLGLTVFVWIFLMNLMDLI, SADVNITMSMALGVFFLILYYSI, LIFILIAGLLPWWSQWILSVP, and AIFHILIITLQAFIFMVLTIV.

This sequence belongs to the ATPase A chain family. F-type ATPases have 2 components, CF(1) - the catalytic core - and CF(0) - the membrane proton channel. CF(1) has five subunits: alpha(3), beta(3), gamma(1), delta(1), epsilon(1). CF(0) has three main subunits: a(1), b(2) and c(9-12). The alpha and beta chains form an alternating ring which encloses part of the gamma chain. CF(1) is attached to CF(0) by a central stalk formed by the gamma and epsilon chains, while a peripheral stalk is formed by the delta and b chains.

Its subcellular location is the cell inner membrane. Its function is as follows. Key component of the proton channel; it plays a direct role in the translocation of protons across the membrane. The chain is ATP synthase subunit a from Aeromonas hydrophila subsp. hydrophila (strain ATCC 7966 / DSM 30187 / BCRC 13018 / CCUG 14551 / JCM 1027 / KCTC 2358 / NCIMB 9240 / NCTC 8049).